Here is a 279-residue protein sequence, read N- to C-terminus: Ribosomal RNA small subunit methyltransferase J (279 aa).

S-adenosyl-L-methionine contacts are provided by residues 138 to 139 (ER) and aspartate 194.

Belongs to the methyltransferase superfamily. RsmJ family.

It localises to the cytoplasm. It carries out the reaction guanosine(1516) in 16S rRNA + S-adenosyl-L-methionine = N(2)-methylguanosine(1516) in 16S rRNA + S-adenosyl-L-homocysteine + H(+). Functionally, specifically methylates the guanosine in position 1516 of 16S rRNA. The protein is Ribosomal RNA small subunit methyltransferase J of Acinetobacter baumannii (strain SDF).